Consider the following 220-residue polypeptide: Peritrophin-55 (220 aa).

An N-terminal signal peptide occupies residues 1–19 (MKSVFVCTLVLALAHHAFA). N-linked (GlcNAc...) asparagine glycosylation is present at Asn29. One can recognise a Chitin-binding type-2 domain in the interval 33 to 95 (ITPCLGNDII…NFIPAPTCEY (63 aa)). A disulfide bridge links Cys68 with Cys84. Low complexity predominate over residues 116–165 (TTLKTTPSKTTPIVTTAPPSTPVPSTIVTNKPDPTTPKTTKPPKVTTTVN). Residues 116 to 220 (TTLKTTPSKT…TPPSIVQLQN (105 aa)) are disordered. The segment covering 197 to 210 (PTPPGMPPTPPSFG) has biased composition (pro residues).

Post-translationally, glycosylated. Larval peritrophic membrane.

Its function is as follows. May bind oligosaccharide structures. The polypeptide is Peritrophin-55 (Lucilia cuprina (Green bottle fly)).